Consider the following 96-residue polypeptide: ATP synthase subunit c (96 aa).

Transmembrane regions (helical) follow at residues 9–29 and 58–78; these read FIAC…GCGI and IGLA…LILI.

Belongs to the ATPase C chain family. In terms of assembly, F-type ATPases have 2 components, F(1) - the catalytic core - and F(0) - the membrane proton channel. F(1) has five subunits: alpha(3), beta(3), gamma(1), delta(1), epsilon(1). F(0) has three main subunits: a(1), b(2) and c(10-14). The alpha and beta chains form an alternating ring which encloses part of the gamma chain. F(1) is attached to F(0) by a central stalk formed by the gamma and epsilon chains, while a peripheral stalk is formed by the delta and b chains.

Its subcellular location is the cell inner membrane. Functionally, f(1)F(0) ATP synthase produces ATP from ADP in the presence of a proton or sodium gradient. F-type ATPases consist of two structural domains, F(1) containing the extramembraneous catalytic core and F(0) containing the membrane proton channel, linked together by a central stalk and a peripheral stalk. During catalysis, ATP synthesis in the catalytic domain of F(1) is coupled via a rotary mechanism of the central stalk subunits to proton translocation. Key component of the F(0) channel; it plays a direct role in translocation across the membrane. A homomeric c-ring of between 10-14 subunits forms the central stalk rotor element with the F(1) delta and epsilon subunits. In Desulfosudis oleivorans (strain DSM 6200 / JCM 39069 / Hxd3) (Desulfococcus oleovorans), this protein is ATP synthase subunit c.